Consider the following 725-residue polypeptide: Antigen peptide transporter 1 (725 aa).

Residues 1–8 lie on the Cytoplasmic side of the membrane; that stretch reads MAAHAWPT. A helical transmembrane segment spans residues 9–29; the sequence is AALLLLLVDWLLLRPVLPGIF. Topologically, residues 30-38 are lumenal; sequence SLLVPEVPL. The chain crosses the membrane as a helical span at residues 39-60; that stretch reads LRVWAVGLSRWAILGLGVRGVL. The Cytoplasmic segment spans residues 61 to 67; sequence GVTAGAR. The chain crosses the membrane as a helical span at residues 68 to 88; it reads GWLAALQPLVAALGLALPGLA. Over 89–110 the chain is Lumenal; that stretch reads SFRKLSAWGALREGDNAGLLHW. The chain crosses the membrane as a helical span at residues 111–131; it reads NSRLDAFVLSYVAALPAAALW. The Cytoplasmic portion of the chain corresponds to 132–163; the sequence is HKLGGFWAPSGHKGAGDMLCRMLGFLDSKKGR. Residues 164-184 traverse the membrane as a helical segment; that stretch reads LHLVLVLLILSCLGEMAIPFF. The ABC transmembrane type-1 domain occupies 164-447; that stretch reads LHLVLVLLIL…LLSIYPSMQK (284 aa). The Lumenal portion of the chain corresponds to 185-204; the sequence is TGRITDWILQDKTAPSFARN. The helical transmembrane segment at 205 to 225 threads the bilayer; that stretch reads MWLMCILTIASTVLEFAGDGI. Residues 226–275 lie on the Cytoplasmic side of the membrane; the sequence is YNITMGHMHSRVHGEVFRAVLHQETGFFLKNPTGSITSRVTEDTSNVCES. The chain crosses the membrane as a helical span at residues 276–296; the sequence is ISDKLNLFLWYLGRGLCLLAF. Over 297–305 the chain is Lumenal; that stretch reads MIWGSFYLT. The chain crosses the membrane as a helical span at residues 306 to 326; the sequence is VVTLLSLPLLFLLPRRLGKVY. Residues 327 to 395 are Cytoplasmic-facing; sequence QSLAVKVQES…VTEVWTMSVS (69 aa). A part of the peptide-binding site region spans residues 352 to 397; it reads PTVRSFANEEGEAQKFRQKLEEMKPLNKKEALAYVTEVWTMSVSGM. A helical membrane pass occupies residues 396 to 416; that stretch reads GMLLKVGILYLGGQLVVRGAV. The Lumenal portion of the chain corresponds to 417 to 420; that stretch reads SSGN. Residues 421–441 form a helical membrane-spanning segment; sequence LVSFVLYQLQFTRAVEVLLSI. Positions 430-464 are part of the peptide-binding site; the sequence is QFTRAVEVLLSIYPSMQKSVGASEKIFEYLDRTPC. Over 442-725 the chain is Cytoplasmic; the sequence is YPSMQKSVGA…MVEALAAPSD (284 aa). The ABC transporter domain occupies 480–719; it reads VKFQDVSFAY…GGCYRSMVEA (240 aa). ATP is bound by residues 515-523, 618-624, and Q678; these read GPNGSGKST and NQLSGGQ. S522 contributes to the Mg(2+) binding site.

Belongs to the ABC transporter superfamily. ABCB family. MHC peptide exporter (TC 3.A.1.209) subfamily. As to quaternary structure, heterodimer of TAP1 and TAP2 (TAP1-TAP2). A component of the peptide loading complex (PLC), interacts via TAPBP with MHCI heterodimer; this interaction mediates peptide-MHCI assembly. Interacts with PSMB5 and PSMB8. Mg(2+) is required as a cofactor.

It localises to the endoplasmic reticulum membrane. It catalyses the reaction a peptide antigen(in) + ATP + H2O = a peptide antigen(out) + ADP + phosphate + H(+). Functionally, ABC transporter associated with antigen processing. In complex with TAP2 mediates unidirectional translocation of peptide antigens from cytosol to endoplasmic reticulum (ER) for loading onto MHC class I (MHCI) molecules. Uses the chemical energy of ATP to export peptides against the concentration gradient. During the transport cycle alternates between 'inward-facing' state with peptide binding site facing the cytosol to 'outward-facing' state with peptide binding site facing the ER lumen. Peptide antigen binding to ATP-loaded TAP1-TAP2 induces a switch to hydrolysis-competent 'outward-facing' conformation ready for peptide loading onto nascent MHCI molecules. Subsequently ATP hydrolysis resets the transporter to the 'inward facing' state for a new cycle. As a component of the peptide loading complex (PLC), acts as a molecular scaffold essential for peptide-MHCI assembly and antigen presentation. This Rattus norvegicus (Rat) protein is Antigen peptide transporter 1 (Tap1).